Here is an 85-residue protein sequence, read N- to C-terminus: Sodium channel neurotoxin MeuNaTxalpha-1 (85 aa).

Residues 1–19 form the signal peptide; the sequence is MNSLVMISLALLVMTGVES. Residues 21 to 83 enclose the LCN-type CS-alpha/beta domain; the sequence is RDGYIADDKN…VPIKVSGKCN (63 aa). A specificity module, loop 1 region spans residues 27–31; sequence DDKNC. Cystine bridges form between Cys31/Cys82, Cys35/Cys55, Cys41/Cys65, and Cys45/Cys67. Specificity module, loop stretches follow at residues 58-62 and 75-83; these read AGQYG and PIKVSGKCN. Asn83 carries the post-translational modification Asparagine amide.

Belongs to the long (4 C-C) scorpion toxin superfamily. Sodium channel inhibitor family. Alpha subfamily. C-terminal amidation does not appear to play an important role in activity, since the non-amidated recombinant toxin and the native toxin (which is amidated) show similar activities on all sodium channels tested. In terms of tissue distribution, expressed by the venom gland.

It localises to the secreted. Alpha toxins bind voltage-independently at site-3 of sodium channels (Nav) and inhibit the inactivation of the activated channels, thereby blocking neuronal transmission. This toxin inhibits inactivation of Nav1.6/SCN8A (EC(50)=3.1 uM) and drosophila DmNav1 (EC(50)=1.17 uM). It also shows a weak inhibition of inactivation on Nav1.2/SCN2A Nav1.3/SCN3A, and Nav1.7/SCN9A. The toxin (1 uM) does not significantly shift the midpoint of activation at the two channels, but induces a significant depolarizing shift in the V(1/2) of inactivation of the channels. The toxin has also been shown to dose-dependently stimulates intracellular signaling in DRG neurons through activation of two kinases (type II protein kinase A (PKA-II) and MAP kinases 1/3 (MAPK1/MAPK3)). Nav1.2/SCN2A is strongly suggested to be the target channel predominantly involved in this activation. In vivo, the toxin induces a dose-dependent thermal hyperalgesia lasting 30-45 minutes. This is Sodium channel neurotoxin MeuNaTxalpha-1 from Mesobuthus eupeus (Lesser Asian scorpion).